Here is an 847-residue protein sequence, read N- to C-terminus: Guanine nucleotide exchange factor VAV3 (847 aa).

The region spanning M1–P119 is the Calponin-homology (CH) domain. Phosphotyrosine is present on Y141. Positions I192–V371 constitute a DH domain. The region spanning R400–S502 is the PH domain. A Phorbol-ester/DAG-type zinc finger spans residues F513–C562. A sufficient for interaction with ROS1 region spans residues D560–E847. Residues P592 to C660 form the SH3 1 domain. In terms of domain architecture, SH2 spans W672–Y766. One can recognise an SH3 2 domain in the interval K788 to E847.

Interacts with the PH domain of SH2B2. Interacts (via SH2 domains) with the phosphorylated form of EPHA2. Interacts with ROS1; constitutive interaction that mediates VAV3 phosphorylation. Post-translationally, phosphorylated. Phosphorylation can be mediated by ROS1. In osteoclasts, undergoes tyrosine phosphorylation in response to CSF1. In terms of tissue distribution, isoform 1 and isoform 3 are widely expressed; both are expressed at very low levels in skeletal muscle. In keratinocytes, isoform 1 is less abundant than isoform 3. Isoform 3 is detected at very low levels, if any, in adrenal gland, bone marrow, spleen, fetal brain and spinal cord; in these tissues, isoform 1 is readily detectable.

Exchange factor for GTP-binding proteins RhoA, RhoG and, to a lesser extent, Rac1. Binds physically to the nucleotide-free states of those GTPases. Plays an important role in angiogenesis. Its recruitment by phosphorylated EPHA2 is critical for EFNA1-induced RAC1 GTPase activation and vascular endothelial cell migration and assembly. May be important for integrin-mediated signaling, at least in some cell types. In osteoclasts, along with SYK tyrosine kinase, required for signaling through integrin alpha-v/beta-1 (ITAGV-ITGB1), a crucial event for osteoclast proper cytoskeleton organization and function. This signaling pathway involves RAC1, but not RHO, activation. Necessary for proper wound healing. In the course of wound healing, required for the phagocytotic cup formation preceding macrophage phagocytosis of apoptotic neutrophils. Responsible for integrin beta-2 (ITGB2)-mediated macrophage adhesion and, to a lesser extent, contributes to beta-3 (ITGB3)-mediated adhesion. Does not affect integrin beta-1 (ITGB1)-mediated adhesion. The chain is Guanine nucleotide exchange factor VAV3 (VAV3) from Homo sapiens (Human).